Here is a 612-residue protein sequence, read N- to C-terminus: Dihydroxy-acid dehydratase (612 aa).

Position 81 (Asp-81) interacts with Mg(2+). Residue Cys-122 participates in [2Fe-2S] cluster binding. Asp-123 and Lys-124 together coordinate Mg(2+). N6-carboxylysine is present on Lys-124. Cys-195 provides a ligand contact to [2Fe-2S] cluster. Glu-491 serves as a coordination point for Mg(2+). Residue Ser-517 is the Proton acceptor of the active site.

Belongs to the IlvD/Edd family. In terms of assembly, homodimer. It depends on [2Fe-2S] cluster as a cofactor. Mg(2+) is required as a cofactor.

It carries out the reaction (2R)-2,3-dihydroxy-3-methylbutanoate = 3-methyl-2-oxobutanoate + H2O. It catalyses the reaction (2R,3R)-2,3-dihydroxy-3-methylpentanoate = (S)-3-methyl-2-oxopentanoate + H2O. It functions in the pathway amino-acid biosynthesis; L-isoleucine biosynthesis; L-isoleucine from 2-oxobutanoate: step 3/4. The protein operates within amino-acid biosynthesis; L-valine biosynthesis; L-valine from pyruvate: step 3/4. Functions in the biosynthesis of branched-chain amino acids. Catalyzes the dehydration of (2R,3R)-2,3-dihydroxy-3-methylpentanoate (2,3-dihydroxy-3-methylvalerate) into 2-oxo-3-methylpentanoate (2-oxo-3-methylvalerate) and of (2R)-2,3-dihydroxy-3-methylbutanoate (2,3-dihydroxyisovalerate) into 2-oxo-3-methylbutanoate (2-oxoisovalerate), the penultimate precursor to L-isoleucine and L-valine, respectively. In Buchnera aphidicola subsp. Baizongia pistaciae (strain Bp), this protein is Dihydroxy-acid dehydratase.